The following is a 500-amino-acid chain: MNFFPWLTIIVILPIFAGSIILFLPHRGNRVIRWYTICICILELLLTTYAFCYHFQLDDPLIQLVEDFKWIDFFDFHWRLGIDGLSIGPILLTGFITTLATLAAWPVTRDSRLFHFLMLAMYSGQIGLFASRDLLLFFIMWELELIPVYLLLSMWGGKKRLYSATKFILYTAGGSVFLLMGVLGVGLYGSTEPTLNFATLVNQSYPVALEIILYIGFFIAFAVKSPIIPLHTWLPDTHGEAHYSTCMLLAGILLKMGAYGLIRINMELLSHAHSIFSPWLVIVGTIQIIYAASTSLGQRNLKKRIAYSSVSHMGFILIGIGSINDTGLNGAILQIVSHGFIGAALFFLAGTSYDRIRLVYLDEMGGIAIPMPKIFTMFSSFSMASLALPGMSGFVAEFIVFFGIITSQKYLLISKLGITFVMAIGIILTPIYSLSMLRQMFYGYKLFNAPNSYVFDSGPRELFVSIAIFIPVIGIGMYPDFVLSLSVDKVEVLLSNFVYR.

Helical transmembrane passes span 3-23, 37-57, 87-107, 113-130, 134-154, 167-187, 208-228, 242-262, 272-292, 305-325, 330-350, 364-384, 386-406, 411-431, and 462-482; these read FFPW…IILF, ICIC…HFQL, IGPI…AWPV, LFHF…GLFA, LLLF…LLSM, FILY…GVGL, ALEI…SPII, HYST…YGLI, AHSI…IYAA, IAYS…SIND, GAIL…FLAG, MGGI…FSMA, LALP…GIIT, LLIS…LTPI, and LFVS…PDFV.

Belongs to the complex I subunit 4 family.

It is found in the plastid. The protein resides in the chloroplast thylakoid membrane. It catalyses the reaction a plastoquinone + NADH + (n+1) H(+)(in) = a plastoquinol + NAD(+) + n H(+)(out). The catalysed reaction is a plastoquinone + NADPH + (n+1) H(+)(in) = a plastoquinol + NADP(+) + n H(+)(out). This is NAD(P)H-quinone oxidoreductase chain 4, chloroplastic from Daucus carota (Wild carrot).